We begin with the raw amino-acid sequence, 242 residues long: 7-cyano-7-deazaguanine synthase (242 aa).

Residues 1–22 form a disordered region; the sequence is MNSSSNEKNKDLNRKNFSSKTD. 32–42 provides a ligand contact to ATP; the sequence is LSGGLDSTTCL. Positions 212, 221, 224, and 227 each coordinate Zn(2+).

It belongs to the QueC family. The cofactor is Zn(2+).

The catalysed reaction is 7-carboxy-7-deazaguanine + NH4(+) + ATP = 7-cyano-7-deazaguanine + ADP + phosphate + H2O + H(+). It functions in the pathway purine metabolism; 7-cyano-7-deazaguanine biosynthesis. Functionally, catalyzes the ATP-dependent conversion of 7-carboxy-7-deazaguanine (CDG) to 7-cyano-7-deazaguanine (preQ(0)). The sequence is that of 7-cyano-7-deazaguanine synthase from Leptospira interrogans serogroup Icterohaemorrhagiae serovar copenhageni (strain Fiocruz L1-130).